The sequence spans 1268 residues: Vigilin (1268 aa).

An N-acetylserine modification is found at Ser-2. Residue Thr-8 is modified to Phosphothreonine. Phosphoserine occurs at positions 11, 31, and 35. 14 KH domains span residues 158-229, 230-302, 303-371, 372-442, 443-514, 515-588, 589-660, 661-734, 735-807, 808-880, 881-979, 980-1059, 1060-1134, and 1135-1209; these read PKEH…RLEV, EKAF…AVEV, KKSQ…SVAA, PSWL…EINI, DHKF…DLII, EQRF…SVPI, FKQF…EVSI, PAKL…DIRA, KPEY…SMLV, DPKH…ECAI, PQKF…EVEV, PFDL…SVTV, DPKY…DVPL, and DHRV…ALQV. Phosphothreonine occurs at positions 295 and 296. Ser-317 is subject to Phosphoserine. Tyr-437 carries the phosphotyrosine modification. A Phosphoserine modification is found at Ser-645. The tract at residues 914 to 944 is disordered; sequence ENAVHSTEPVVQENGDEAGEGREAKDCDPGS. Residues 932–944 are compositionally biased toward basic and acidic residues; that stretch reads GEGREAKDCDPGS. Lys-991 carries the N6-acetyllysine modification. The tract at residues 1233–1268 is disordered; the sequence is WTASSSEKAPDMSSSEEFPSFGAQVAPKTLPWGPKR. The span at 1234-1249 shows a compositional bias: polar residues; the sequence is TASSSEKAPDMSSSEE. Phosphoserine occurs at positions 1247 and 1252.

Its subcellular location is the cytoplasm. It localises to the nucleus. Its function is as follows. Appears to play a role in cell sterol metabolism. It may function to protect cells from over-accumulation of cholesterol. This is Vigilin (HDLBP) from Homo sapiens (Human).